We begin with the raw amino-acid sequence, 251 residues long: tRNA pseudouridine synthase A (251 aa).

The Nucleophile role is filled by aspartate 56. Residue tyrosine 110 participates in substrate binding.

The protein belongs to the tRNA pseudouridine synthase TruA family.

The enzyme catalyses uridine(38/39/40) in tRNA = pseudouridine(38/39/40) in tRNA. Its function is as follows. Formation of pseudouridine at positions 38, 39 and 40 in the anticodon stem and loop of transfer RNAs. This is tRNA pseudouridine synthase A from Picrophilus torridus (strain ATCC 700027 / DSM 9790 / JCM 10055 / NBRC 100828 / KAW 2/3).